The chain runs to 153 residues: Deoxyuridine 5'-triphosphate nucleotidohydrolase (153 aa).

Residues 71–73, N84, 88–90, and M98 each bind substrate; these read RSG and LID.

It belongs to the dUTPase family. Mg(2+) is required as a cofactor.

The enzyme catalyses dUTP + H2O = dUMP + diphosphate + H(+). It functions in the pathway pyrimidine metabolism; dUMP biosynthesis; dUMP from dCTP (dUTP route): step 2/2. Its function is as follows. This enzyme is involved in nucleotide metabolism: it produces dUMP, the immediate precursor of thymidine nucleotides and it decreases the intracellular concentration of dUTP so that uracil cannot be incorporated into DNA. This chain is Deoxyuridine 5'-triphosphate nucleotidohydrolase, found in Wigglesworthia glossinidia brevipalpis.